A 177-amino-acid polypeptide reads, in one-letter code: Translation initiation factor IF-3 (177 aa).

Belongs to the IF-3 family. As to quaternary structure, monomer.

It localises to the cytoplasm. Its function is as follows. IF-3 binds to the 30S ribosomal subunit and shifts the equilibrium between 70S ribosomes and their 50S and 30S subunits in favor of the free subunits, thus enhancing the availability of 30S subunits on which protein synthesis initiation begins. The chain is Translation initiation factor IF-3 from Rhizobium meliloti (strain 1021) (Ensifer meliloti).